Consider the following 1198-residue polypeptide: Rac guanine nucleotide exchange factor B (1198 aa).

A disordered region spans residues 1–104; it reads MFSNFFGSSK…QHQGVITSLQ (104 aa). Low complexity predominate over residues 8-20; sequence SSKRNTIASSSSS. Over residues 21–34 the composition is skewed to basic and acidic residues; it reads SKKDKDNGKDESSK. Residues 35 to 58 show a composition bias toward polar residues; the sequence is LKNSGSSTLPKPITNNESGNNFIT. Low complexity predominate over residues 59 to 97; the sequence is SPSVSSPLISPLSSSPSPLLSSSSNSIQSTSHQQQQQHQ. A Calponin-homology (CH) 1 domain is found at 126–232; the sequence is SSLEQTARKW…NIVVLGKHAS (107 aa). The tract at residues 260-284 is disordered; that stretch reads FGGNHNNNNNNNNNNNTSNGDLSPV. Low complexity predominate over residues 263-275; that stretch reads NHNNNNNNNNNNN. Calponin-homology (CH) domains lie at 341 to 449 and 511 to 619; these read PELQ…NKMY and PEDM…ENFD. In terms of domain architecture, DH spans 632 to 846; that stretch reads RRQKVIEEII…KRVADHVNES (215 aa). In terms of domain architecture, PH spans 876-1026; that stretch reads TYIREGFLEI…WMEDLRSCLQ (151 aa). Over residues 940–952 the composition is skewed to acidic residues; it reads GEACVDGDDDGGE. 2 disordered regions span residues 940–989 and 1076–1198; these read GEAC…SNKS and NNNN…IDNQ. Composition is skewed to low complexity over residues 977 to 989 and 1076 to 1118; these read NSNN…SNKS and NNNN…NNND. The segment covering 1155–1167 has biased composition (acidic residues); that stretch reads DETISDTESDDYE. Residues 1188 to 1198 are compositionally biased toward polar residues; the sequence is FSDTIKNIDNQ.

As to quaternary structure, binds to F-actin.

The protein localises to the late endosome. Involved in the regulation of the late steps of the endocytic pathway. This chain is Rac guanine nucleotide exchange factor B (gxcB), found in Dictyostelium discoideum (Social amoeba).